We begin with the raw amino-acid sequence, 167 residues long: MMAKVESQTGDLNEKLIAVNRVAKVVKGGRIFSFTALTVVGDGNGRVGFGYGKAREVPAAIQKAMEKARRNIRDVQLKGNTLQHPIKGRHSGSKVYMQPASEGTGIIAGGAMRAVLEVVGVQNVLSKAYGSTNPINVVRATLDALENMNSPEQIAAKRGLSVNELLG.

The 64-residue stretch at 12–75 folds into the S5 DRBM domain; that stretch reads LNEKLIAVNR…EKARRNIRDV (64 aa).

This sequence belongs to the universal ribosomal protein uS5 family. As to quaternary structure, part of the 30S ribosomal subunit. Contacts proteins S4 and S8.

In terms of biological role, with S4 and S12 plays an important role in translational accuracy. Functionally, located at the back of the 30S subunit body where it stabilizes the conformation of the head with respect to the body. This is Small ribosomal subunit protein uS5 from Psychromonas ingrahamii (strain DSM 17664 / CCUG 51855 / 37).